The following is a 112-amino-acid chain: Putative pterin-4-alpha-carbinolamine dehydratase (112 aa).

It belongs to the pterin-4-alpha-carbinolamine dehydratase family.

The enzyme catalyses (4aS,6R)-4a-hydroxy-L-erythro-5,6,7,8-tetrahydrobiopterin = (6R)-L-erythro-6,7-dihydrobiopterin + H2O. The protein is Putative pterin-4-alpha-carbinolamine dehydratase of Dechloromonas aromatica (strain RCB).